A 506-amino-acid chain; its full sequence is Tripartite terminase subunit 3 (506 aa).

The active-site For ATPase activity is glutamate 128. Active-site for nuclease activity residues include aspartate 282, glutamate 354, and aspartate 475.

It belongs to the herpesviridae TRM3 protein family. In terms of assembly, interacts with the terminase subunits TRM1 and TRM2. Interacts with portal protein.

It localises to the host nucleus. Its function is as follows. Component of the molecular motor that translocates viral genomic DNA in empty capsid during DNA packaging. Forms a tripartite terminase complex together with TRM1 and TRM2 in the host cytoplasm. Once the complex reaches the host nucleus, it interacts with the capsid portal vertex. This portal forms a ring in which genomic DNA is translocated into the capsid. TRM3 carries an RNase H-like nuclease activity that plays an important role for the cleavage of concatemeric viral DNA into unit length genomes. The sequence is that of Tripartite terminase subunit 3 from Amazona oratrix (yellow-headed parrot).